The chain runs to 206 residues: Small ribosomal subunit protein uS4 (206 aa).

In terms of domain architecture, S4 RNA-binding spans 96–156 (TRLDNVVYRM…EKSRTQARIK (61 aa)).

Belongs to the universal ribosomal protein uS4 family. Part of the 30S ribosomal subunit. Contacts protein S5. The interaction surface between S4 and S5 is involved in control of translational fidelity.

In terms of biological role, one of the primary rRNA binding proteins, it binds directly to 16S rRNA where it nucleates assembly of the body of the 30S subunit. Its function is as follows. With S5 and S12 plays an important role in translational accuracy. This Shewanella denitrificans (strain OS217 / ATCC BAA-1090 / DSM 15013) protein is Small ribosomal subunit protein uS4.